Here is a 142-residue protein sequence, read N- to C-terminus: Large ribosomal subunit protein uL13 (142 aa).

The protein belongs to the universal ribosomal protein uL13 family. As to quaternary structure, part of the 50S ribosomal subunit.

Its function is as follows. This protein is one of the early assembly proteins of the 50S ribosomal subunit, although it is not seen to bind rRNA by itself. It is important during the early stages of 50S assembly. The sequence is that of Large ribosomal subunit protein uL13 from Alcanivorax borkumensis (strain ATCC 700651 / DSM 11573 / NCIMB 13689 / SK2).